We begin with the raw amino-acid sequence, 98 residues long: NADH-ubiquinone oxidoreductase chain 4L (98 aa).

3 helical membrane-spanning segments follow: residues 1–21 (MPYIYTNLFLAFLTSLLGMLI), 29–49 (SLLCLEGMMLSMFIMTSLTIL), and 61–81 (IILLVFAACEAAVGLALLVMV).

The protein belongs to the complex I subunit 4L family. Core subunit of respiratory chain NADH dehydrogenase (Complex I) which is composed of 45 different subunits.

The protein localises to the mitochondrion inner membrane. It carries out the reaction a ubiquinone + NADH + 5 H(+)(in) = a ubiquinol + NAD(+) + 4 H(+)(out). Core subunit of the mitochondrial membrane respiratory chain NADH dehydrogenase (Complex I) which catalyzes electron transfer from NADH through the respiratory chain, using ubiquinone as an electron acceptor. Part of the enzyme membrane arm which is embedded in the lipid bilayer and involved in proton translocation. The sequence is that of NADH-ubiquinone oxidoreductase chain 4L (MT-ND4L) from Cephalopachus bancanus (Western tarsier).